A 103-amino-acid chain; its full sequence is Potassium voltage-gated channel subfamily E member 3 (103 aa).

N-linked (GlcNAc...) asparagine glycans are attached at residues N5, N22, and N41. The interval L30–G52 is disordered. The helical transmembrane segment at S57–L77 threads the bilayer. The interval F68–Y79 is interaction with KCNQ1. Residues G78–I103 are Cytoplasmic-facing.

It belongs to the potassium channel KCNE family. Interacts with KCNB1. Interacts with KCNC2. Associates with KCNC4/Kv3.4. Interacts with KCNQ1; associates with a KCNQ1:KCNE3 stoichiometry of 4:4; produces a current with nearly instantaneous activation with a linear current-voltage relationship and alters membrane raft localization; affects KCNQ1 structure and gating properties.

The protein resides in the cell membrane. It localises to the cytoplasm. It is found in the perikaryon. Its subcellular location is the cell projection. The protein localises to the dendrite. The protein resides in the membrane raft. Its function is as follows. Ancillary protein that functions as a regulatory subunit of the voltage-gated potassium (Kv) channel complex composed of pore-forming and potassium-conducting alpha subunits and of regulatory beta subunits. KCNE3 beta subunit modulates the gating kinetics and enhances stability of the channel complex. Alters the gating of the delayed rectifier Kv channel containing KCNB1 alpha subunit. Associates with KCNC4/Kv3.4 alpha subunit to form the subthreshold Kv channel in skeletal muscle and to establish the resting membrane potential (RMP) in muscle cells. Association with KCNQ1/KCLQT1 alpha subunit may form the intestinal cAMP-stimulated potassium channel involved in chloride secretion that produces a current with nearly instantaneous activation with a linear current-voltage relationship. In Mus musculus (Mouse), this protein is Potassium voltage-gated channel subfamily E member 3.